The primary structure comprises 284 residues: 4-hydroxybenzoate octaprenyltransferase (284 aa).

The next 7 helical transmembrane spans lie at valine 33–phenylalanine 53, isoleucine 93–leucine 113, tyrosine 136–alanine 156, glycine 159–tyrosine 179, leucine 209–tyrosine 229, leucine 231–tyrosine 248, and alanine 264–tryptophan 284.

It belongs to the UbiA prenyltransferase family. The cofactor is Mg(2+).

Its subcellular location is the cell inner membrane. The enzyme catalyses all-trans-octaprenyl diphosphate + 4-hydroxybenzoate = 4-hydroxy-3-(all-trans-octaprenyl)benzoate + diphosphate. It participates in cofactor biosynthesis; ubiquinone biosynthesis. Functionally, catalyzes the prenylation of para-hydroxybenzoate (PHB) with an all-trans polyprenyl group. Mediates the second step in the final reaction sequence of ubiquinone-8 (UQ-8) biosynthesis, which is the condensation of the polyisoprenoid side chain with PHB, generating the first membrane-bound Q intermediate 3-octaprenyl-4-hydroxybenzoate. The sequence is that of 4-hydroxybenzoate octaprenyltransferase from Vibrio campbellii (strain ATCC BAA-1116).